Reading from the N-terminus, the 496-residue chain is Cobyric acid synthase (496 aa).

The GATase cobBQ-type domain maps to 257–447 (KINVAIILLK…MHGILDNPAV (191 aa)). Cysteine 338 serves as the catalytic Nucleophile. Histidine 439 is a catalytic residue.

The protein belongs to the CobB/CobQ family. CobQ subfamily.

The protein operates within cofactor biosynthesis; adenosylcobalamin biosynthesis. Its function is as follows. Catalyzes amidations at positions B, D, E, and G on adenosylcobyrinic A,C-diamide. NH(2) groups are provided by glutamine, and one molecule of ATP is hydrogenolyzed for each amidation. The protein is Cobyric acid synthase of Parabacteroides distasonis (strain ATCC 8503 / DSM 20701 / CIP 104284 / JCM 5825 / NCTC 11152).